A 400-amino-acid chain; its full sequence is Arabinan endo-1,5-alpha-L-arabinosidase B (400 aa).

The N-terminal stretch at 1–16 (MAVIFVLFFLVSMALS) is a signal peptide. An N-linked (GlcNAc...) asparagine glycan is attached at N24. D70 acts as the Proton acceptor in catalysis. A glycan (N-linked (GlcNAc...) asparagine) is linked at N184. Catalysis depends on E277, which acts as the Proton donor. The N-linked (GlcNAc...) asparagine glycan is linked to N372.

This sequence belongs to the glycosyl hydrolase 43 family.

The protein localises to the secreted. The catalysed reaction is Endohydrolysis of (1-&gt;5)-alpha-arabinofuranosidic linkages in (1-&gt;5)-arabinans.. Its pathway is glycan metabolism; L-arabinan degradation. In terms of biological role, endo-1,5-alpha-L-arabinanase involved in degradation of pectin. Its preferred substrate is linear 1,5-alpha-L-arabinan. This Emericella nidulans (strain FGSC A4 / ATCC 38163 / CBS 112.46 / NRRL 194 / M139) (Aspergillus nidulans) protein is Arabinan endo-1,5-alpha-L-arabinosidase B (abnB).